Reading from the N-terminus, the 458-residue chain is tRNA modification GTPase MnmE (458 aa).

(6S)-5-formyl-5,6,7,8-tetrahydrofolate is bound by residues Arg-30, Glu-90, and Lys-129. A TrmE-type G domain is found at 225 to 379 (GLSICLIGCP…LHQTIDTIIW (155 aa)). Residue Asn-235 participates in K(+) binding. Residues 235 to 240 (NVGKSS), 254 to 260 (SPIPGTT), and 279 to 282 (DTAG) contribute to the GTP site. Residue Ser-239 coordinates Mg(2+). K(+) contacts are provided by Ser-254, Ile-256, and Thr-259. A Mg(2+)-binding site is contributed by Thr-260. Lys-458 provides a ligand contact to (6S)-5-formyl-5,6,7,8-tetrahydrofolate.

Belongs to the TRAFAC class TrmE-Era-EngA-EngB-Septin-like GTPase superfamily. TrmE GTPase family. In terms of assembly, homodimer. Heterotetramer of two MnmE and two MnmG subunits. K(+) is required as a cofactor.

It is found in the cytoplasm. Exhibits a very high intrinsic GTPase hydrolysis rate. Involved in the addition of a carboxymethylaminomethyl (cmnm) group at the wobble position (U34) of certain tRNAs, forming tRNA-cmnm(5)s(2)U34. This is tRNA modification GTPase MnmE from Protochlamydia amoebophila (strain UWE25).